Here is a 136-residue protein sequence, read N- to C-terminus: Small ribosomal subunit protein eS6 (136 aa).

The protein belongs to the eukaryotic ribosomal protein eS6 family.

The polypeptide is Small ribosomal subunit protein eS6 (Methanosarcina acetivorans (strain ATCC 35395 / DSM 2834 / JCM 12185 / C2A)).